Consider the following 80-residue polypeptide: Acyl carrier protein (80 aa).

Positions Glu-4–Gln-79 constitute a Carrier domain. Position 39 is an O-(pantetheine 4'-phosphoryl)serine (Ser-39).

It belongs to the acyl carrier protein (ACP) family. Post-translationally, 4'-phosphopantetheine is transferred from CoA to a specific serine of apo-ACP by AcpS. This modification is essential for activity because fatty acids are bound in thioester linkage to the sulfhydryl of the prosthetic group.

The protein localises to the cytoplasm. It participates in lipid metabolism; fatty acid biosynthesis. Its function is as follows. Carrier of the growing fatty acid chain in fatty acid biosynthesis. This is Acyl carrier protein from Parasynechococcus marenigrum (strain WH8102).